Here is a 210-residue protein sequence, read N- to C-terminus: Outer-membrane lipoprotein carrier protein (210 aa).

An N-terminal signal peptide occupies residues 1–23; it reads MKKRIQKTILTVLFSSLSSIAFA.

Belongs to the LolA family. In terms of assembly, monomer.

Its subcellular location is the periplasm. Its function is as follows. Participates in the translocation of lipoproteins from the inner membrane to the outer membrane. Only forms a complex with a lipoprotein if the residue after the N-terminal Cys is not an aspartate (The Asp acts as a targeting signal to indicate that the lipoprotein should stay in the inner membrane). This Haemophilus ducreyi (strain 35000HP / ATCC 700724) protein is Outer-membrane lipoprotein carrier protein.